Reading from the N-terminus, the 599-residue chain is Beta-(1--&gt;2)glucan export ATP-binding/permease protein NdvA (599 aa).

The 281-residue stretch at 21–301 (TITMCVASVL…ISAFINQTVT (281 aa)) folds into the ABC transmembrane type-1 domain. 5 consecutive transmembrane segments (helical) span residues 22 to 42 (ITMC…PVLF), 55 to 75 (IFSP…AAVF), 156 to 176 (MRMS…GQLV), 248 to 268 (MAST…VTKG), and 276 to 296 (IAFI…SAFI). Positions 335–569 (IVFDNVTFEF…GGRFSDLLRA (235 aa)) constitute an ABC transporter domain. 368 to 375 (GPTGAGKT) contacts ATP.

This sequence belongs to the ABC transporter superfamily. Beta-(1--&gt;2)glucan exporter (TC 3.A.1.108.1) family. As to quaternary structure, homodimer.

The protein localises to the cell inner membrane. It catalyses the reaction [(1-&gt;2)-beta-D-glucosyl](n)(in) + ATP + H2O = [(1-&gt;2)-beta-D-glucosyl](n)(out) + ADP + phosphate + H(+). Its function is as follows. Involved in beta-(1--&gt;2)glucan export. Transmembrane domains (TMD) form a pore in the inner membrane and the ATP-binding domain (NBD) is responsible for energy generation. The polypeptide is Beta-(1--&gt;2)glucan export ATP-binding/permease protein NdvA (Brucella suis biovar 1 (strain 1330)).